A 1150-amino-acid polypeptide reads, in one-letter code: C5a peptidase (1150 aa).

The first 31 residues, 1-31, serve as a signal peptide directing secretion; it reads MRKKQKLPFDKLAIALMSTSILLNAQSDIKA. Residues 33 to 73 form a disordered region; it reads TVTEDTPAAEQAVETPQPTAVSEEVPSSKETKTPQTPDNAE. One can recognise a Peptidase S8 domain in the interval 99–581; it reads KATIRDLNDP…AGAVDAKKAS (483 aa). Residues Asp-130, His-193, and Ser-512 each act as charge relay system in the active site. 2 stretches are compositionally biased toward basic and acidic residues: residues 1029 to 1054 and 1061 to 1073; these read EGHS…KPEQ and PDKK…EKDS. The disordered stretch occupies residues 1029 to 1116; that stretch reads EGHSNKPEQD…RDQLPTTNDK (88 aa). A run of 3 repeats spans residues 1034-1050, 1051-1067, and 1068-1084. Residues 1034–1084 are 3 X 17 AA tandem repeats; the sequence is KPEQDGSDQAPDKKPEAKPEQDGSGQTPDKKPETKPEKDSSGQTPGKTPQK. Residues 1075 to 1089 show a composition bias toward polar residues; that stretch reads GQTPGKTPQKGQPSR. The short motif at 1110 to 1114 is the LPXTG sorting signal element; it reads LPTTN. Thr-1113 is subject to Pentaglycyl murein peptidoglycan amidated threonine. Residues 1114 to 1150 constitute a propeptide, removed by sortase; sequence NDKDTNRLHLLKLVMTTFFFGLVAHIFKTKRQKETKK.

It belongs to the peptidase S8 family. Cleaved by SpeB protease; leading to its degradation. Degradation by SpeB is probably strictly regulated to preserve integrity of C5a peptidase.

It is found in the secreted. Its subcellular location is the cell wall. The enzyme catalyses The primary cleavage site is at 67-His-|-Lys-68 in human C5a with a minor secondary cleavage site at 58-Ala-|-Ser-59.. Its function is as follows. This virulence factor of S.pyogenes specifically cleaves the human serum chemotaxin C5a at '68-Lys-|-Asp-69' bond near its C-terminus, destroying its ability to serve as a chemoattractant. The sequence is that of C5a peptidase (scpA) from Streptococcus pyogenes serotype M18 (strain MGAS8232).